Reading from the N-terminus, the 74-residue chain is MEKQNIIEMEGVITESLPNAMFRVHLDNGFDVLAHISGKIRRNYIRILPGDRVKIEMTPYDLTKGRITYRLRKR.

The 72-residue stretch at 1–72 (MEKQNIIEME…TKGRITYRLR (72 aa)) folds into the S1-like domain.

The protein belongs to the IF-1 family. As to quaternary structure, component of the 30S ribosomal translation pre-initiation complex which assembles on the 30S ribosome in the order IF-2 and IF-3, IF-1 and N-formylmethionyl-tRNA(fMet); mRNA recruitment can occur at any time during PIC assembly.

It localises to the plastid. The protein localises to the chloroplast. One of the essential components for the initiation of protein synthesis. Stabilizes the binding of IF-2 and IF-3 on the 30S subunit to which N-formylmethionyl-tRNA(fMet) subsequently binds. Helps modulate mRNA selection, yielding the 30S pre-initiation complex (PIC). Upon addition of the 50S ribosomal subunit IF-1, IF-2 and IF-3 are released leaving the mature 70S translation initiation complex. The polypeptide is Translation initiation factor IF-1, chloroplastic (Chlorokybus atmophyticus (Soil alga)).